The sequence spans 295 residues: Glycine--tRNA ligase alpha subunit (295 aa).

This sequence belongs to the class-II aminoacyl-tRNA synthetase family. As to quaternary structure, tetramer of two alpha and two beta subunits.

It is found in the cytoplasm. It catalyses the reaction tRNA(Gly) + glycine + ATP = glycyl-tRNA(Gly) + AMP + diphosphate. The chain is Glycine--tRNA ligase alpha subunit from Desulforamulus reducens (strain ATCC BAA-1160 / DSM 100696 / MI-1) (Desulfotomaculum reducens).